A 495-amino-acid chain; its full sequence is Geraniol 8-hydroxylase (495 aa).

Residues 5–25 traverse the membrane as a helical segment; sequence FLTIAIGFLFTITLYQALNFF. Cysteine 438 provides a ligand contact to heme.

The protein belongs to the cytochrome P450 family. Heme is required as a cofactor. Expressed in leaves, stems and roots.

It localises to the endoplasmic reticulum membrane. The catalysed reaction is (2E)-geraniol + reduced [NADPH--hemoprotein reductase] + O2 = (6E)-8-hydroxygeraniol + oxidized [NADPH--hemoprotein reductase] + H2O + H(+). Hydroxylase involved in the biosynthesis of hydroxygeraniol, a precursor of the iridoid monoterpenoid swertiamarin. This is Geraniol 8-hydroxylase (CYP76B10) from Swertia mussotii (Felwort).